Consider the following 247-residue polypeptide: Neurotrophic factor BDNF precursor form (247 aa).

The first 18 residues, Met1–Ala18, serve as a signal peptide directing secretion. A propeptide spanning residues Ala19 to Arg128 is cleaved from the precursor. The N-linked (GlcNAc...) asparagine glycan is linked to Asn121. 3 disulfide bridges follow: Cys141–Cys208, Cys186–Cys237, and Cys196–Cys239.

Belongs to the NGF-beta family. Monomers and homodimers. Binds to NTRK2/TRKB. Can form heterodimers with other neurotrophin family members, such as NTF3 and NTF4 (in vitro), but the physiological relevance of this is not clear. BDNF precursor form: interacts with the heterodimer formed by NGFR and SORCS2. Mature BDNF has much lower affinity for the heterodimer formed by NGFR and SORCS2. Post-translationally, N-glycosylated and glycosulfated, contrary to mature BDNF. In terms of processing, mature BDNF is produced by proteolytic removal of the propeptide, catalyzed by a FURIN family member. In addition, the precursor form is proteolytically cleaved within the propeptide, but this is not an obligatory intermediate for the production of mature BDNF. Can be converted into mature BDNF by plasmin (PLG).

It is found in the secreted. In terms of biological role, important signaling molecule that activates signaling cascades downstream of NTRK2. During development, promotes the survival and differentiation of selected neuronal populations of the peripheral and central nervous systems. Participates in axonal growth, pathfinding and in the modulation of dendritic growth and morphology. Major regulator of synaptic transmission and plasticity at adult synapses in many regions of the CNS. The versatility of BDNF is emphasized by its contribution to a range of adaptive neuronal responses including long-term potentiation (LTP), long-term depression (LTD), certain forms of short-term synaptic plasticity, as well as homeostatic regulation of intrinsic neuronal excitability. Its function is as follows. Important signaling molecule that activates signaling cascades downstream of NTRK2. Activates signaling cascades via the heterodimeric receptor formed by NGFR and SORCS2. Signaling via NGFR and SORCS2 plays a role in synaptic plasticity and long-term depression (LTD). Binding to NGFR and SORCS2 promotes neuronal apoptosis. Promotes neuronal growth cone collapse. This chain is Neurotrophic factor BDNF precursor form (BDNF), found in Felis catus (Cat).